A 594-amino-acid chain; its full sequence is Protein FAM200C (594 aa).

In Homo sapiens (Human), this protein is Protein FAM200C.